The primary structure comprises 179 residues: Gene 49 protein (179 aa).

Disordered stretches follow at residues 1–38 (MKGNQLSYDDPWSTAPAQPEPAPAPEPETAPSATVTTA) and 102–137 (HYAGSGGSAPANGGGGGQQQSRAPQAAQEAPGGEKR). A compositionally biased stretch (pro residues) spans 18 to 28 (QPEPAPAPEPE). Over residues 29–38 (TAPSATVTTA) the composition is skewed to low complexity. Positions 104–119 (AGSGGSAPANGGGGGQ) are enriched in gly residues. A compositionally biased stretch (low complexity) spans 120–132 (QQSRAPQAAQEAP).

This Mycobacterium (Mycobacteriophage L5) protein is Gene 49 protein (49).